Reading from the N-terminus, the 116-residue chain is U16-barytoxin-Tl1c (116 aa).

The first 20 residues, 1–20 (MKTIIVFLSLLVLATKFGDA), serve as a signal peptide directing secretion. The propeptide occupies 21-74 (NEGVNQEQMKEVIQNEFREDFLNEMAAMSLLQQLEAIESTLLEKEADRNSRQKR). 3 cysteine pairs are disulfide-bonded: Cys75–Cys90, Cys82–Cys95, and Cys89–Cys110.

Belongs to the neurotoxin 14 (magi-1) family. 06 (ICK-Trit) subfamily. As to expression, expressed by the venom gland.

It is found in the secreted. Its function is as follows. Ion channel inhibitor. The chain is U16-barytoxin-Tl1c from Trittame loki (Brush-footed trapdoor spider).